A 359-amino-acid polypeptide reads, in one-letter code: DNA replication and repair protein RecF (359 aa).

30 to 37 (GQNAQGKT) contributes to the ATP binding site.

Belongs to the RecF family.

Its subcellular location is the cytoplasm. In terms of biological role, the RecF protein is involved in DNA metabolism; it is required for DNA replication and normal SOS inducibility. RecF binds preferentially to single-stranded, linear DNA. It also seems to bind ATP. The protein is DNA replication and repair protein RecF of Lactococcus lactis subsp. cremoris (strain SK11).